The following is a 299-amino-acid chain: Coenzyme PQQ synthesis protein B (299 aa).

Belongs to the PqqB family.

Its pathway is cofactor biosynthesis; pyrroloquinoline quinone biosynthesis. In terms of biological role, may be involved in the transport of PQQ or its precursor to the periplasm. This is Coenzyme PQQ synthesis protein B from Xanthomonas axonopodis pv. citri (strain 306).